Here is a 241-residue protein sequence, read N- to C-terminus: Uridylate kinase (241 aa).

14–17 serves as a coordination point for ATP; the sequence is KLSG. The segment at 22 to 27 is involved in allosteric activation by GTP; the sequence is GGLGMG. A UMP-binding site is contributed by G56. ATP-binding residues include G57 and R61. UMP-binding positions include D77 and 138-145; that span reads TGNPFFTT. Positions 165, 171, and 174 each coordinate ATP.

The protein belongs to the UMP kinase family. In terms of assembly, homohexamer.

It is found in the cytoplasm. It catalyses the reaction UMP + ATP = UDP + ADP. It functions in the pathway pyrimidine metabolism; CTP biosynthesis via de novo pathway; UDP from UMP (UMPK route): step 1/1. Its activity is regulated as follows. Allosterically activated by GTP. Inhibited by UTP. Its function is as follows. Catalyzes the reversible phosphorylation of UMP to UDP. This chain is Uridylate kinase, found in Psychrobacter sp. (strain PRwf-1).